We begin with the raw amino-acid sequence, 251 residues long: uncharacterized protein (251 aa).

The N-terminal stretch at M1–G25 is a signal peptide. The N-palmitoyl cysteine moiety is linked to residue C26. Residue C26 is the site of S-diacylglycerol cysteine attachment. The LysM domain maps to S40–L84. Residues T93 to A112 are compositionally biased toward low complexity. The disordered stretch occupies residues T93 to K115.

It belongs to the peptidase M23B family.

Its subcellular location is the cell inner membrane. This is an uncharacterized protein from Escherichia coli (strain K12).